Here is a 423-residue protein sequence, read N- to C-terminus: Growth hormone-releasing hormone receptor (423 aa).

The N-terminal stretch at 1-22 (MDSGVWAACIFCLLSSLPVALG) is a signal peptide. Residues 23–130 (HVHPECDFIT…DEKSYFSTVR (108 aa)) are Extracellular-facing. Cystine bridges form between cysteine 41–cysteine 64, cysteine 55–cysteine 96, and cysteine 78–cysteine 112. Asparagine 50 carries N-linked (GlcNAc...) asparagine glycosylation. The chain crosses the membrane as a helical span at residues 131-151 (IVYTTGHSVSAVALFVAIAIL). Residues 152–167 (VALRRLHCPRNYIHSQ) lie on the Cytoplasmic side of the membrane. A helical membrane pass occupies residues 168-188 (LFATFILKAGAVFLKDAALFH). Topologically, residues 189–210 (SENTDHCSFSTVLCKVSVATSH) are extracellular. Residues 211–231 (FATMTNFSWLLAEAVYLTCLL) form a helical membrane-spanning segment. Residues 232–240 (ASTSPSTRR) are Cytoplasmic-facing. Residues 241-261 (AFWWLVLAGWGLPLLFTGTWV) form a helical membrane-spanning segment. Topologically, residues 262 to 283 (GCKLAFEDVACWDLDDSSPYWW) are extracellular. The helical transmembrane segment at 284 to 304 (IIKGPIVLSVGVNFGLFLNII) threads the bilayer. Residues 305-331 (RILLRKLEPAQGSLHTQPQYWRLSKST) are Cytoplasmic-facing. The chain crosses the membrane as a helical span at residues 332–352 (LLLIPLFGIHYVIFNFLPDSA). Topologically, residues 353 to 357 (GLGIR) are extracellular. A helical membrane pass occupies residues 358-378 (LPLELGLGSFQGFIVAILYCF). Topologically, residues 379–423 (LNQEVRTEISRRWHGHDPELLPAWRTHAKWAKPSRSRAKVLTTVC) are cytoplasmic.

It belongs to the G-protein coupled receptor 2 family. Pituitary gland. Also detected in the lymphocytes and thymocytes.

Its subcellular location is the cell membrane. Receptor for GRF, coupled to G proteins which activate adenylyl cyclase. Stimulates somatotroph cell growth, growth hormone gene transcription and growth hormone secretion. This Sus scrofa (Pig) protein is Growth hormone-releasing hormone receptor (GHRHR).